Reading from the N-terminus, the 51-residue chain is Large ribosomal subunit protein eL39 (51 aa).

This sequence belongs to the eukaryotic ribosomal protein eL39 family.

This Saccharolobus islandicus (strain Y.N.15.51 / Yellowstone #2) (Sulfolobus islandicus) protein is Large ribosomal subunit protein eL39.